Here is a 169-residue protein sequence, read N- to C-terminus: Allophycocyanin subunit beta-18 (169 aa).

Asn72 is modified (N4-methylasparagine). (2R,3E)-phycocyanobilin is bound at residue Cys82.

Belongs to the phycobiliprotein family. As to quaternary structure, heterodimer of an alpha and a beta chain. Contains one covalently linked bilin chromophore.

It localises to the plastid. It is found in the chloroplast thylakoid membrane. Its function is as follows. Light-harvesting photosynthetic bile pigment-protein from the phycobiliprotein complex. Allophycocyanin has a maximum absorption at approximately 650 nanometers. This is Allophycocyanin subunit beta-18 (apcF) from Porphyra purpurea (Red seaweed).